The primary structure comprises 99 residues: Large ribosomal subunit protein bL21 (99 aa).

It belongs to the bacterial ribosomal protein bL21 family. Part of the 50S ribosomal subunit. Contacts protein L20.

In terms of biological role, this protein binds to 23S rRNA in the presence of protein L20. This Mesomycoplasma hyopneumoniae (strain 232) (Mycoplasma hyopneumoniae) protein is Large ribosomal subunit protein bL21.